The chain runs to 473 residues: Homeobox protein ATH1 (473 aa).

The interval 205-221 (SKYLHSVQEILSHFAAY) is SR/KY domain. A BELL domain region spans residues 266 to 336 (QRRALEAKKT…NLRERICKKI (71 aa)). Residues 372–434 (IWRPQRGLPE…NARVRLWKPM (63 aa)) constitute a DNA-binding region (homeobox). Residues 448–473 (NNSHIQPNGPTLRMPKSVMMSQAMHK) are disordered.

Belongs to the TALE/BELL homeobox family. May form heterodimeric complex with the TALE/KNOX protein STM. Most abundant in flowers.

Its subcellular location is the nucleus. In terms of biological role, transcription factor which may be involved in the signal transduction pathway downstream of the COP1 gene. Controls floral competency as a specific activator of FLC expression. Is responsive of the nuclear import of SHOOT MERISTEMLESS (STM). In Arabidopsis thaliana (Mouse-ear cress), this protein is Homeobox protein ATH1 (ATH1).